A 119-amino-acid polypeptide reads, in one-letter code: Large ribosomal subunit protein uL22c (119 aa).

The protein belongs to the universal ribosomal protein uL22 family. In terms of assembly, part of the 50S ribosomal subunit.

Its subcellular location is the plastid. The protein resides in the chloroplast. This protein binds specifically to 23S rRNA. In terms of biological role, the globular domain of the protein is located near the polypeptide exit tunnel on the outside of the subunit, while an extended beta-hairpin is found that lines the wall of the exit tunnel in the center of the 70S ribosome. The chain is Large ribosomal subunit protein uL22c (rpl22) from Chaetosphaeridium globosum (Charophycean green alga).